Consider the following 294-residue polypeptide: Mitochondrial HMG-box protein CIM1 (294 aa).

The transit peptide at 1–90 (MKATLLLKAQ…RLYYASFCQS (90 aa)) directs the protein to the mitochondrion. Residues 27–102 (NRTPYTAFQY…IDILNVSKIE (76 aa)) are HMG-box A. The HMG-box B stretch occupies residues 110 to 258 (PIPAMSEYLL…IQILQKNMDI (149 aa)).

The protein resides in the mitochondrion matrix. Mitochondrial HMG-box protein that limits the copy number of mitochondrial DNA (mtDNA), antagonizing HMG-box containing protein ABF2, a mtDNA packaging factor. In Saccharomyces cerevisiae (strain ATCC 204508 / S288c) (Baker's yeast), this protein is Mitochondrial HMG-box protein CIM1.